The following is a 326-amino-acid chain: Phosphate acyltransferase (326 aa).

It belongs to the PlsX family. As to quaternary structure, homodimer. Probably interacts with PlsY.

It is found in the cytoplasm. It carries out the reaction a fatty acyl-[ACP] + phosphate = an acyl phosphate + holo-[ACP]. It functions in the pathway lipid metabolism; phospholipid metabolism. Its function is as follows. Catalyzes the reversible formation of acyl-phosphate (acyl-PO(4)) from acyl-[acyl-carrier-protein] (acyl-ACP). This enzyme utilizes acyl-ACP as fatty acyl donor, but not acyl-CoA. The polypeptide is Phosphate acyltransferase (Macrococcus caseolyticus (strain JCSC5402) (Macrococcoides caseolyticum)).